The primary structure comprises 303 residues: L(+)-tartrate dehydratase subunit alpha (303 aa).

Iron-sulfur cluster contacts are provided by cysteine 71, cysteine 190, and cysteine 277.

The protein belongs to the class-I fumarase family. Tetramer of two alpha and two beta subunits. It depends on iron-sulfur cluster as a cofactor.

The enzyme catalyses (2R,3R)-tartrate = oxaloacetate + H2O. This Escherichia coli O157:H7 protein is L(+)-tartrate dehydratase subunit alpha (ttdA).